The chain runs to 903 residues: Pentatricopeptide repeat-containing protein At3g02330, mitochondrial (903 aa).

A mitochondrion-targeting transit peptide spans 1–31 (MAESLRLLHMTRSVVSFNRCLTEKISYRRVP). PPR repeat units lie at residues 47 to 81 (STTNFSFVFKECAKQGALELGKQAHAHMIISGFRP), 82 to 112 (TTFVLNCLLQVYTNSRDFVSASMVFDKMPLR), 113 to 143 (DVVSWNKMINGYSKSNDMFKANSFFNMMPVR), 144 to 178 (DVVSWNSMLSGYLQNGESLKSIEVFVDMGREGIEF), 179 to 213 (DGRTFAIILKVCSFLEDTSLGMQIHGIVVRVGCDT), 214 to 244 (DVVAASALLDMYAKGKRFVESLRVFQGIPEK), 245 to 279 (NSVSWSAIIAGCVQNNLLSLALKFFKEMQKVNAGV), 280 to 314 (SQSIYASVLRSCAALSELRLGGQLHAHALKSDFAA), 346 to 380 (NRQSYNAMITGYSQEEHGFKALLLFHRLMSSGLGF), 381 to 415 (DEISLSGVFRACALVKGLSEGLQIYGLAIKSSLSL), 416 to 446 (DVCVANAAIDMYGKCQALAEAFRVFDEMRRR), 447 to 481 (DAVSWNAIIAAHEQNGKGYETLFLFVSMLRSRIEP), 482 to 515 (DEFTFGSILKACTGGSLGYGMEIHSSIVKSGMAS), 516 to 550 (NSSVGCSLIDMYSKCGMIEEAEKIHSRFFQRANVS), 567 to 601 (MCVSWNSIISGYVMKEQSEDAQMLFTRMMEMGITP), 602 to 636 (DKFTYATVLDTCANLASAGLGKQIHAQVIKKELQS), 637 to 667 (DVYICSTLVDMYSKCGDLHDSRLMFEKSLRR), 668 to 702 (DFVTWNAMICGYAHHGKGEEAIQLFERMILENIKP), 703 to 738 (NHVTFISILRACAHMGLIDKGLEYFYMMKRDYGLDP), and 739 to 769 (QLPHYSNMVDILGKSGKVKRALELIREMPFE). Positions 774–850 (IWRTLLGVCT…EPGCSWVELK (77 aa)) are type E motif. The tract at residues 851–881 (DELHVFLVGDKAHPRWEEIYEELGLIYSEMK) is type E(+) motif.

It belongs to the PPR family. PCMP-E subfamily. In terms of assembly, interacts with MORF1/RIP8.

Its subcellular location is the mitochondrion. Functionally, involved in C-to-U editing of mitochondrial RNA. Required for RNA editing at 8 sites in 6 different mRNAs in mitochondria. This is Pentatricopeptide repeat-containing protein At3g02330, mitochondrial (PCMP-E90) from Arabidopsis thaliana (Mouse-ear cress).